The following is a 327-amino-acid chain: Peroxidase N (327 aa).

A signal peptide spans 1–28 (MKTQTKVMGGHVLLTVFTLCMLCSAVRA). A Pyrrolidone carboxylic acid modification is found at Gln29. Intrachain disulfides connect Cys39/Cys116, Cys72/Cys77, Cys122/Cys323, and Cys200/Cys232. His70 functions as the Proton acceptor in the catalytic mechanism. Residues Asp71, Val74, Gly76, Asp78, and Ser80 each coordinate Ca(2+). Asn155 carries N-linked (GlcNAc...) asparagine glycosylation. Pro163 lines the substrate pocket. Asn182 carries N-linked (GlcNAc...) asparagine glycosylation. Residue His193 coordinates heme b. Thr194 provides a ligand contact to Ca(2+). N-linked (GlcNAc...) asparagine glycosylation is found at Asn209 and Asn239. A Ca(2+)-binding site is contributed by Asp245. N-linked (GlcNAc...) asparagine glycosylation is present at Asn247. The Ca(2+) site is built by Ser248 and Asp253. An N-linked (GlcNAc...) asparagine glycan is attached at Asn281.

The protein belongs to the peroxidase family. Classical plant (class III) peroxidase subfamily. The cofactor is Ca(2+). Heme b is required as a cofactor.

Its subcellular location is the secreted. It carries out the reaction 2 a phenolic donor + H2O2 = 2 a phenolic radical donor + 2 H2O. Functionally, removal of H(2)O(2), oxidation of toxic reductants, biosynthesis and degradation of lignin, suberization, auxin catabolism, response to environmental stresses such as wounding, pathogen attack and oxidative stress. These functions might be dependent on each isozyme/isoform in each plant tissue. The chain is Peroxidase N (HRPN) from Armoracia rusticana (Horseradish).